Here is a 305-residue protein sequence, read N- to C-terminus: Peroxisome assembly protein 26 (305 aa).

A disordered region spans residues methionine 1–valine 25. Residues methionine 1–histidine 246 lie on the Cytoplasmic side of the membrane. Residues phenylalanine 247–valine 267 form a helical; Signal-anchor for type II membrane protein membrane-spanning segment. Topologically, residues arginine 268–aspartate 305 are peroxisomal matrix.

This sequence belongs to the peroxin-26 family. Interacts (via its cytoplasmic domain) with PEX6; interaction is direct and is ATP-dependent. Interacts with PEX1; interaction is indirect and is mediated via interaction with PEX6.

It localises to the peroxisome membrane. In terms of biological role, peroxisomal docking factor that anchors PEX1 and PEX6 to peroxisome membranes. PEX26 is therefore required for the formation of the PEX1-PEX6 AAA ATPase complex, a complex that mediates the extraction of the PEX5 receptor from peroxisomal membrane. This is Peroxisome assembly protein 26 (PEX26) from Macaca fascicularis (Crab-eating macaque).